We begin with the raw amino-acid sequence, 148 residues long: Large-conductance mechanosensitive channel (148 aa).

The next 2 membrane-spanning stretches (helical) occupy residues 15-35 (LDMA…KSLV) and 84-104 (VGVF…VFLL).

Belongs to the MscL family. Homopentamer.

Its subcellular location is the cell inner membrane. Channel that opens in response to stretch forces in the membrane lipid bilayer. May participate in the regulation of osmotic pressure changes within the cell. The protein is Large-conductance mechanosensitive channel of Nitratidesulfovibrio vulgaris (strain DSM 19637 / Miyazaki F) (Desulfovibrio vulgaris).